A 179-amino-acid polypeptide reads, in one-letter code: Large ribosomal subunit protein uL10 (179 aa).

The segment at 137-179 (KEELYAMLVGRVKAPITGLVFALSGILRNLVYVLNAIKEKKSE) is binds L7/L12 dimers.

In terms of assembly, part of the ribosomal stalk of the 50S ribosomal subunit. The N-terminus interacts with L11 and 23S rRNA to form the base of the stalk. The C-terminus forms an elongated spine to which 3 L12 dimers bind in a sequential fashion forming a heptameric L10(L12)2(L12)2(L12)2 complex.

In terms of biological role, forms part of the ribosomal stalk, playing a central role in the interaction of the ribosome with GTP-bound translation factors (such as IF-2, EF-Tu, EF-G and RF3). The protein is Large ribosomal subunit protein uL10 (rplJ) of Thermotoga maritima (strain ATCC 43589 / DSM 3109 / JCM 10099 / NBRC 100826 / MSB8).